The primary structure comprises 229 residues: Potassium/proton antiporter CemA (229 aa).

The next 3 helical transmembrane spans lie at 7–27 (FTPLFYLASIVFLPWWISFSV), 107–127 (ILHFSTNIICFIILSGYSILG), and 189–209 (IISGLVSTFPVILDTIFKYWI).

This sequence belongs to the CemA family.

It localises to the plastid. The protein localises to the chloroplast inner membrane. It catalyses the reaction K(+)(in) + H(+)(out) = K(+)(out) + H(+)(in). Its function is as follows. Contributes to K(+)/H(+) antiport activity by supporting proton efflux to control proton extrusion and homeostasis in chloroplasts in a light-dependent manner to modulate photosynthesis. Prevents excessive induction of non-photochemical quenching (NPQ) under continuous-light conditions. Indirectly promotes efficient inorganic carbon uptake into chloroplasts. In Nicotiana tomentosiformis (Tobacco), this protein is Potassium/proton antiporter CemA.